The following is a 324-amino-acid chain: HSF-like protein (324 aa).

Positions 1–19 (MNSLVALVLLGQIIGSTVS) are cleaved as a signal peptide. 2 consecutive Cystatin fetuin-A-type domains span residues 21 to 130 (QLGP…VKCS) and 141 to 254 (RDCP…SDCV). Disulfide bonds link Cys28/Cys315, Cys85/Cys96, Cys110/Cys129, Cys143/Cys146, Cys205/Cys217, and Cys230/Cys253. A glycan (N-linked (GlcNAc...) asparagine) is linked at Asn95. An N-linked (GlcNAc...) asparagine glycan is attached at Asn204. Residue Asn282 is glycosylated (N-linked (GlcNAc...) asparagine).

It belongs to the fetuin family. Homodimer. In terms of tissue distribution, expressed by the liver.

Its subcellular location is the secreted. In terms of biological role, may not have antihemorrhagic activity. The polypeptide is HSF-like protein (Protobothrops flavoviridis (Habu)).